We begin with the raw amino-acid sequence, 149 residues long: UPF0179 protein MM_0589 (149 aa).

Belongs to the UPF0179 family.

This is UPF0179 protein MM_0589 from Methanosarcina mazei (strain ATCC BAA-159 / DSM 3647 / Goe1 / Go1 / JCM 11833 / OCM 88) (Methanosarcina frisia).